Consider the following 339-residue polypeptide: MSSSSSSGAATGFAVCSDPQKSFSKMFKRTVILLAGPTGSGKTAVSLKLAPLVDGEIISVDSMQVYQGMDIGTAKVSLADRKEVPHHLIDVCHVQESFNAVDFYYHAVQACQDILSRNKVPILVGGTGFYFHTFLSGPPSGPSPDFVLREQLTLEAQERGISALYQELELLDPVYAATITKHDKNKIIRALEIIRKTGSKVSSYAWQSTVNESKEYHCRGWLLSPDPELLRHNILERCDQMLEEGLLDEVQALLAAGIKGNSSASRAIGYREWIEFLDLGSPPDLFEITKQKFITNTWRYTKKQRTWFKRYSLFRELRPMGMTLDDMAKKIAQDYFLCG.

36-43 (GPTGSGKT) contacts ATP. 38 to 43 (TGSGKT) contributes to the substrate binding site. An interaction with substrate tRNA region spans residues 61–64 (DSMQ).

This sequence belongs to the IPP transferase family. Monomer. It depends on Mg(2+) as a cofactor.

The catalysed reaction is adenosine(37) in tRNA + dimethylallyl diphosphate = N(6)-dimethylallyladenosine(37) in tRNA + diphosphate. Its function is as follows. Catalyzes the transfer of a dimethylallyl group onto the adenine at position 37 in tRNAs that read codons beginning with uridine, leading to the formation of N6-(dimethylallyl)adenosine (i(6)A). The sequence is that of tRNA dimethylallyltransferase from Chlamydia trachomatis serovar L2 (strain ATCC VR-902B / DSM 19102 / 434/Bu).